The following is a 391-amino-acid chain: Polyketide synthase 3 (391 aa).

The active site involves Cys164.

It belongs to the thiolase-like superfamily. Chalcone/stilbene synthases family. As to quaternary structure, homodimer.

The enzyme catalyses (E)-4-coumaroyl-CoA + 3 malonyl-CoA + 3 H(+) = 2',4,4',6'-tetrahydroxychalcone + 3 CO2 + 4 CoA. It functions in the pathway secondary metabolite biosynthesis; flavonoid biosynthesis. Its function is as follows. Polyketide synthase producing p-coumaryltriacetic acid lactone (CTAL) and slightly naringenin chalcone. Can use p-coumaryl-CoA as substrate. This chain is Polyketide synthase 3 (PKS3), found in Rubus idaeus (Raspberry).